Reading from the N-terminus, the 213-residue chain is uncharacterized protein (213 aa).

Positions 1 to 21 (MKKILFLTVICFCLSSIKAYA) are cleaved as a signal peptide.

This is an uncharacterized protein from Rickettsia prowazekii (strain Madrid E).